The primary structure comprises 782 residues: MSGEDGPAAGPGAAAAAAAARERRQEQLRQWGARAGADPGPGERRARTVRFERAAEFLAACAGGDLDEARLMLRAADPGPGSGAASDPAVPPPARAVLDSTNADGISALHQACIDENLEVVRFLVEQGATVNQADNEGWTPLHVAASCGYLDIARYLLSHGANIAAVNSDGDLPLDLAESDAMEGLLKAEITRRGVDVEAAKRAEEELLLHDTRCWLNGGAMPEARHPRTGASALHVAAAKGYIEVMRLLLQAGYDTELRDGDGWTPLHAAAHWGVEDACRLLAEHGGGMDSLTHAGQRPCDLADEDVMNLLEELAQKQEDLRNQKEGSQGRGQESQVPSSSKHRRSSVCRLSSREKISLQDLSKERRPGGAGGPPIGDEDEGGEASAEHPAVEPRALNGVSSPVSSNPKSPVLPEEAPFSRRFGLQKTGSTGALGPSERRATEGVLGLQRSASSSLLEKASTQAREPRLARITPTPAQKVPEPFTLYEAATPPSLDHSVPPSRREPGSIVKPNVLTASAAPLADSRDRRRSYQMPVRDEESESQRKARSRLMRQSRRSTQGVTLTDLKEAEKVAGKVPEPEQPALPSLDPSRRPRVPGVENAEGPAQREAPEGQGQGPQAAREHRKAGHERRGPAEGEEAGPAERSPECSTVDGGSQVRRQHSQRDLVLESKQEHEEPDGGFRKMYTELRRENERLREALTETTLRLAQLKVELERATQRQERFAERPALLELERFERRALERKAAELEEELKALSDLRADNQRLKDENAALIRVISKLSK.

2 stretches are compositionally biased toward low complexity: residues 1 to 19 (MSGE…AAAA) and 77 to 88 (DPGPGSGAASDP). Disordered regions lie at residues 1 to 45 (MSGE…GERR) and 77 to 98 (DPGP…RAVL). Serine 2 carries the N-acetylserine modification. 4 ANK repeats span residues 104 to 133 (DGIS…TVNQ), 137 to 166 (EGWT…NIAA), 230 to 259 (TGAS…DTEL), and 263 to 292 (DGWT…GMDS). Residues 301–332 (CDLADEDVMNLLEELAQKQEDLRNQKEGSQGR) are a coiled coil. Positions 321–685 (DLRNQKEGSQ…HEEPDGGFRK (365 aa)) are disordered. The span at 332-341 (RGQESQVPSS) shows a compositional bias: polar residues. A compositionally biased stretch (basic and acidic residues) spans 353-369 (SSREKISLQDLSKERRP). Positions 401–413 (VSSPVSSNPKSPV) are enriched in low complexity. Phosphoserine is present on residues serine 403, serine 411, serine 431, serine 454, and serine 509. Positions 451-465 (RSASSSLLEKASTQA) are enriched in polar residues. The span at 537-546 (VRDEESESQR) shows a compositional bias: basic and acidic residues. Positions 547–557 (KARSRLMRQSR) are enriched in basic residues. At threonine 560 the chain carries Phosphothreonine. Serine 647 carries the phosphoserine modification. Over residues 664-685 (SQRDLVLESKQEHEEPDGGFRK) the composition is skewed to basic and acidic residues. Residues 681–782 (GGFRKMYTEL…LIRVISKLSK (102 aa)) adopt a coiled-coil conformation.

As to quaternary structure, PP1 comprises a catalytic subunit, PPP1CA, PPP1CB or PPP1CC, and one or several targeting or regulatory subunits. PPP1R12C mediates binding to myosin. Interacts via its N-terminus with PPP1CB. Interacts with IL16. Interacts with the coiled-coil domain of MPRIP. Interacts with NOD2. Phosphorylation at Thr-560 is essential for its interaction with PPP1CB.

It is found in the cytoplasm. It localises to the cytoskeleton. The protein resides in the stress fiber. Functionally, regulates myosin phosphatase activity. The sequence is that of Protein phosphatase 1 regulatory subunit 12C from Mus musculus (Mouse).